Reading from the N-terminus, the 245-residue chain is Octanoyltransferase (245 aa).

Residues 54–242 form the BPL/LPL catalytic domain; it reads QNAHEQVWLL…SFEQIFGPII (189 aa). Substrate contacts are provided by residues 93–100, 173–175, and 186–188; these read RGGEFTYH, AIG, and GVS. C204 functions as the Acyl-thioester intermediate in the catalytic mechanism.

This sequence belongs to the LipB family.

It localises to the cytoplasm. The enzyme catalyses octanoyl-[ACP] + L-lysyl-[protein] = N(6)-octanoyl-L-lysyl-[protein] + holo-[ACP] + H(+). It participates in protein modification; protein lipoylation via endogenous pathway; protein N(6)-(lipoyl)lysine from octanoyl-[acyl-carrier-protein]: step 1/2. Catalyzes the transfer of endogenously produced octanoic acid from octanoyl-acyl-carrier-protein onto the lipoyl domains of lipoate-dependent enzymes. Lipoyl-ACP can also act as a substrate although octanoyl-ACP is likely to be the physiological substrate. The chain is Octanoyltransferase from Bartonella henselae (strain ATCC 49882 / DSM 28221 / CCUG 30454 / Houston 1) (Rochalimaea henselae).